A 337-amino-acid chain; its full sequence is Endochitinase 37 (337 aa).

A signal peptide spans 1 to 25 (MTRLLDASFLLLPVIASTLFGTASA). The GH18 domain maps to 38–337 (KVLQGYWENW…GSKNWTFGDN (300 aa)). The active-site Proton donor is Glu160. N-linked (GlcNAc...) asparagine glycosylation occurs at Asn331.

The protein belongs to the glycosyl hydrolase 18 family. Chitinase class V subfamily. As to quaternary structure, monomer.

It localises to the secreted. It carries out the reaction Random endo-hydrolysis of N-acetyl-beta-D-glucosaminide (1-&gt;4)-beta-linkages in chitin and chitodextrins.. Secreted chitinase involved in the degradation of chitin, a component of the cell walls of fungi and exoskeletal elements of some animals (including worms and arthropods). Plays a morphogenetic role during apical growth, cell division and differentiation (cell wall morphogenesis). May be involved in the degradation and further assimilation of phytopathogenic fungi, namely mycoparasitism, the major mechanism accounting for the antagonistic activity against phytopathogenic fungi displayed by Trichoderma. This Trichoderma harzianum (Hypocrea lixii) protein is Endochitinase 37 (chit37).